The chain runs to 394 residues: Elongation factor Tu 1 (394 aa).

The region spanning 10–204 is the tr-type G domain; the sequence is KPHVNVGTIG…ALDTYIPEPA (195 aa). A G1 region spans residues 19–26; sequence GHVDHGKT. 19-26 lines the GTP pocket; it reads GHVDHGKT. T26 provides a ligand contact to Mg(2+). Residues 60–64 form a G2 region; that stretch reads GITIN. Residues 81-84 form a G3 region; that stretch reads DCPG. Residues 81 to 85 and 136 to 139 each bind GTP; these read DCPGH and NKCD. The interval 136–139 is G4; sequence NKCD. The segment at 174 to 176 is G5; the sequence is SAL.

This sequence belongs to the TRAFAC class translation factor GTPase superfamily. Classic translation factor GTPase family. EF-Tu/EF-1A subfamily. Monomer.

The protein localises to the cytoplasm. The enzyme catalyses GTP + H2O = GDP + phosphate + H(+). In terms of biological role, GTP hydrolase that promotes the GTP-dependent binding of aminoacyl-tRNA to the A-site of ribosomes during protein biosynthesis. This is Elongation factor Tu 1 from Shewanella frigidimarina (strain NCIMB 400).